Consider the following 158-residue polypeptide: NAD(P)H-quinone oxidoreductase subunit J, chloroplastic (158 aa).

This sequence belongs to the complex I 30 kDa subunit family. As to quaternary structure, NDH is composed of at least 16 different subunits, 5 of which are encoded in the nucleus.

Its subcellular location is the plastid. It localises to the chloroplast thylakoid membrane. The enzyme catalyses a plastoquinone + NADH + (n+1) H(+)(in) = a plastoquinol + NAD(+) + n H(+)(out). The catalysed reaction is a plastoquinone + NADPH + (n+1) H(+)(in) = a plastoquinol + NADP(+) + n H(+)(out). In terms of biological role, NDH shuttles electrons from NAD(P)H:plastoquinone, via FMN and iron-sulfur (Fe-S) centers, to quinones in the photosynthetic chain and possibly in a chloroplast respiratory chain. The immediate electron acceptor for the enzyme in this species is believed to be plastoquinone. Couples the redox reaction to proton translocation, and thus conserves the redox energy in a proton gradient. This Helianthus annuus (Common sunflower) protein is NAD(P)H-quinone oxidoreductase subunit J, chloroplastic.